The chain runs to 225 residues: Large ribosomal subunit protein eL15 (225 aa).

Positions 159 to 180 (RPFRGLTSAGKKMRGLRKSRGL) are disordered. Over residues 169 to 180 (KKMRGLRKSRGL) the composition is skewed to basic residues.

Belongs to the eukaryotic ribosomal protein eL15 family.

This is Large ribosomal subunit protein eL15 (rpl15e) from Aeropyrum pernix (strain ATCC 700893 / DSM 11879 / JCM 9820 / NBRC 100138 / K1).